The chain runs to 311 residues: MERALGLPAEEDLFHKSLAASAKRMESAFRSPPGLDLSHPRDRQPSPLACYEAPEPEALLQPGVGGDPLALPPGSVCVKYGESASRSSVAESSGGEQSPDDDSDGRCELLLRGAGGDPRDASPAAGGGGGGGGGGGGGPGGGGGGGLKAAEGGCSNGHGHGGSKKSKEQKALRLNINARERRRMHDLNDALDELRAVIPYAHSPSVRKLSKIATLLLAKNYILMQAQALEEMRRLVAYLNQGQAISAASLPSSAAAAAAAAAALHPALGAYEQAAGYPFSAGLPPATSCPEKCAIFNSVSSSLCKQCTEKP.

Residues 22–170 (AKRMESAFRS…GGSKKSKEQK (149 aa)) are disordered. Residues 81–96 (GESASRSSVAESSGGE) show a composition bias toward low complexity. Gly residues predominate over residues 125 to 147 (AGGGGGGGGGGGGGPGGGGGGGL). The region spanning 171–225 (ALRLNINARERRRMHDLNDALDELRAVIPYAHSPSVRKLSKIATLLLAKNYILMQ) is the bHLH domain.

Its subcellular location is the nucleus. In terms of biological role, may act as a transcriptional repressor. The chain is Class E basic helix-loop-helix protein 22 (BHLHE22) from Gallus gallus (Chicken).